Reading from the N-terminus, the 350-residue chain is Nuclear pore complex-interacting protein family member A1 (350 aa).

The disordered stretch occupies residues 306 to 325 (KTPPECLLTPLPPSAPPSVD).

Belongs to the NPIP family. As to quaternary structure, may associate with the nuclear pore complex. As to expression, widely expressed.

The protein localises to the nucleus. It localises to the nuclear pore complex. It is found in the nucleus membrane. In Homo sapiens (Human), this protein is Nuclear pore complex-interacting protein family member A1 (NPIPA1).